Here is a 172-residue protein sequence, read N- to C-terminus: Transcriptional regulator CdrL (172 aa).

Residues 72-113 are disordered; that stretch reads SPSAVEEVRTTPASGGRADAEEPGDDGETDAEHADTSATGDE. Residues 116–160 form a DZANK-type zinc finger; that stretch reads CSQCGAELSADHVYCPNCGGKATHRVFCECGDEIRADWAFCPRCG.

The protein belongs to the CdrL family.

It localises to the cytoplasm. Transcriptional regulator involved in the control of cell division. The polypeptide is Transcriptional regulator CdrL (Halobacterium salinarum (strain ATCC 29341 / DSM 671 / R1)).